The chain runs to 227 residues: Ribose-5-phosphate isomerase A (227 aa).

Substrate is bound by residues 26–29 (TGST), 82–85 (DGAD), and 95–98 (KGGG). Glutamate 104 functions as the Proton acceptor in the catalytic mechanism. Lysine 122 contacts substrate.

Belongs to the ribose 5-phosphate isomerase family. As to quaternary structure, homodimer.

The catalysed reaction is aldehydo-D-ribose 5-phosphate = D-ribulose 5-phosphate. It functions in the pathway carbohydrate degradation; pentose phosphate pathway; D-ribose 5-phosphate from D-ribulose 5-phosphate (non-oxidative stage): step 1/1. Its function is as follows. Catalyzes the reversible conversion of ribose-5-phosphate to ribulose 5-phosphate. The polypeptide is Ribose-5-phosphate isomerase A (Streptococcus equi subsp. zooepidemicus (strain H70)).